Here is a 176-residue protein sequence, read N- to C-terminus: Sperm-egg fusion protein TMEM95 (176 aa).

Positions 1–16 (MWRLALGGVFLAAAQA) are cleaved as a signal peptide. 4 disulfide bridges follow: C17–C118, C20–C121, C105–C128, and C109–C134. Over 17–145 (CVFCRLPAHD…PGSQDLWEAK (129 aa)) the chain is Extracellular. The helical transmembrane segment at 146–166 (ILLLSIFGAFLLLGVLSLLVE) threads the bilayer. Residues 167 to 176 (SHHLQAKSGL) are Cytoplasmic-facing.

This sequence belongs to the TMEM95 family. In terms of assembly, does not interact with sperm-egg fusion proteins IZUMO1 or IZUMO1R/JUNO. Post-translationally, N-glycosylated. Spermatozoa (at protein level).

Its subcellular location is the cytoplasmic vesicle. It localises to the secretory vesicle. It is found in the acrosome membrane. Its function is as follows. Sperm protein required for fusion of sperm with the egg membrane during fertilization. This chain is Sperm-egg fusion protein TMEM95, found in Homo sapiens (Human).